The sequence spans 203 residues: Small ribosomal subunit protein uS4 (203 aa).

An S4 RNA-binding domain is found at 93-153 (QRLDSLVYRL…DKSKNIVPIQ (61 aa)).

This sequence belongs to the universal ribosomal protein uS4 family. As to quaternary structure, part of the 30S ribosomal subunit. Contacts protein S5. The interaction surface between S4 and S5 is involved in control of translational fidelity.

One of the primary rRNA binding proteins, it binds directly to 16S rRNA where it nucleates assembly of the body of the 30S subunit. In terms of biological role, with S5 and S12 plays an important role in translational accuracy. The sequence is that of Small ribosomal subunit protein uS4 from Leuconostoc citreum (strain KM20).